Reading from the N-terminus, the 197-residue chain is Rac-like GTP-binding protein 5 (197 aa).

13 to 20 (GDGAVGKT) contributes to the GTP binding site. An Effector region motif is present at residues 35–43 (YVPTVFDNF). Residues 60-64 (DTAGQ) and 118-121 (TKLD) each bind GTP. The residue at position 194 (cysteine 194) is a Cysteine methyl ester. Cysteine 194 carries S-geranylgeranyl cysteine lipidation. A propeptide spans 195 to 197 (AIL) (removed in mature form).

The protein belongs to the small GTPase superfamily. Rho family.

It localises to the cytoplasm. The protein localises to the membrane. Its function is as follows. Inactive GDP-bound Rho GTPases reside in the cytosol, are found in a complex with Rho GDP-dissociation inhibitors (Rho GDIs), and are released from the GDI protein in order to translocate to membranes upon activation. This is Rac-like GTP-binding protein 5 (RAC5) from Oryza sativa subsp. japonica (Rice).